Reading from the N-terminus, the 497-residue chain is Tripartite motif-containing protein 5 (497 aa).

Ala-2 bears the N-acetylalanine mark. The RING-type zinc-finger motif lies at 15–60 (CPICLELLTEPLSLPCGHSFCQACITANHRKSMLYKEGERSCPVCR). A Phosphoserine modification is found at Ser-87. The B box-type zinc-finger motif lies at 92-133 (LKVDHCARHGEKLLLFCQEDSKVICWLCERSQEHRGHHTFLM). Zn(2+) contacts are provided by Cys-97, His-100, Cys-119, and His-125. A coiled-coil region spans residues 137-225 (AQEYHVKLQT…LTKSETEMVQ (89 aa)). The interval 187-200 (FEQLREILDWEESN) is required for interaction with GABARAP and for autophagy. One can recognise a B30.2/SPRY domain in the interval 283-497 (LKGMLDMFRE…VPMTLCSPSS (215 aa)).

Belongs to the TRIM/RBCC family. In terms of assembly, can form homodimers and homotrimers. In addition to lower-order dimerization, also exhibits a higher-order multimerization and both low- and high-order multimerizations are essential for its restriction activity. Interacts with BTBD1 and BTBD2. Interacts with PSMC4, PSMC5, PSMD7 and HSPA8/HSC70. Interacts (via B30.2/SPRY domain) with HSPA1A/B. Interacts with PSMC2, MAP3K7/TAK1, TAB2 and TAB3. Interacts with SQSTM1. Interacts with TRIM6 and TRIM34. Interacts with ULK1 (phosphorylated form), GABARAP, GABARAPL1, GABARAPL2, MAP1LC3A, MAP1LC3C and BECN1. Post-translationally, degraded in a proteasome-independent fashion in the absence of viral infection but in a proteasome-dependent fashion following exposure to restriction sensitive virus. In terms of processing, autoubiquitinated in a RING finger- and UBE2D2-dependent manner. Monoubiquitinated by TRIM21. Deubiquitinated by Yersinia YopJ. Ubiquitination may not lead to proteasomal degradation.

It is found in the cytoplasm. Its subcellular location is the nucleus. It catalyses the reaction S-ubiquitinyl-[E2 ubiquitin-conjugating enzyme]-L-cysteine + [acceptor protein]-L-lysine = [E2 ubiquitin-conjugating enzyme]-L-cysteine + N(6)-ubiquitinyl-[acceptor protein]-L-lysine.. It functions in the pathway protein modification; protein ubiquitination. Its function is as follows. Capsid-specific restriction factor that prevents infection from non-host-adapted retroviruses. Blocks viral replication early in the life cycle, after viral entry but before reverse transcription. In addition to acting as a capsid-specific restriction factor, also acts as a pattern recognition receptor that activates innate immune signaling in response to the retroviral capsid lattice. Binding to the viral capsid triggers its E3 ubiquitin ligase activity, and in concert with the heterodimeric ubiquitin conjugating enzyme complex UBE2V1-UBE2N (also known as UBC13-UEV1A complex) generates 'Lys-63'-linked polyubiquitin chains, which in turn are catalysts in the autophosphorylation of the MAP3K7/TAK1 complex (includes TAK1, TAB2, and TAB3). Activation of the MAP3K7/TAK1 complex by autophosphorylation results in the induction and expression of NF-kappa-B and MAPK-responsive inflammatory genes, thereby leading to an innate immune response in the infected cell. Plays a role in regulating autophagy through activation of autophagy regulator BECN1 by causing its dissociation from its inhibitors BCL2 and TAB2. This is Tripartite motif-containing protein 5 (TRIM5) from Papio anubis (Olive baboon).